The sequence spans 128 residues: Small ribosomal subunit protein uS11 (128 aa).

The protein belongs to the universal ribosomal protein uS11 family. Part of the 30S ribosomal subunit. Interacts with proteins S7 and S18. Binds to IF-3.

Functionally, located on the platform of the 30S subunit, it bridges several disparate RNA helices of the 16S rRNA. Forms part of the Shine-Dalgarno cleft in the 70S ribosome. This chain is Small ribosomal subunit protein uS11, found in Solidesulfovibrio magneticus (strain ATCC 700980 / DSM 13731 / RS-1) (Desulfovibrio magneticus).